A 320-amino-acid polypeptide reads, in one-letter code: Putative movement protein (320 aa).

Catalysis depends on residues His144, Asp171, and Ser199. Residues 251–320 (RRSRSISAKR…GKGNSDGSSP (70 aa)) are disordered. Basic and acidic residues predominate over residues 278–289 (RIERFGKDEFGR).

Belongs to the tobamoviruses movement protein family.

In terms of biological role, may play a role in viral cell to cell movement by increasing the size exclusion limit of plasmodesmata and forming a complex with viral RNA to assist its movement. May also have a papain-like protease activity and cleave the genome polyprotein. In Malus sylvestris (European crab apple), this protein is Putative movement protein.